The sequence spans 96 residues: Large ribosomal subunit protein bL25 (96 aa).

Belongs to the bacterial ribosomal protein bL25 family. Part of the 50S ribosomal subunit; part of the 5S rRNA/L5/L18/L25 subcomplex. Contacts the 5S rRNA. Binds to the 5S rRNA independently of L5 and L18.

This is one of the proteins that binds to the 5S RNA in the ribosome where it forms part of the central protuberance. This is Large ribosomal subunit protein bL25 from Buchnera aphidicola subsp. Schizaphis graminum (strain Sg).